Here is a 245-residue protein sequence, read N- to C-terminus: Complement C1q subcomponent subunit C (245 aa).

An N-terminal signal peptide occupies residues 1-28; sequence MVVGTSCQPQHGLYLLLLLLALPLRSQA. The 82-residue stretch at 31 to 112 folds into the Collagen-like domain; it reads GCYGIPGMPG…GPPGEPGEEG (82 aa). 5 positions are modified to 4-hydroxyproline: Pro-36, Pro-39, Pro-42, Pro-45, and Pro-63. Residues 42 to 119 are disordered; that stretch reads PGTPGKDGHD…EEGRYKQKHQ (78 aa). Lys-75 is subject to 5-hydroxylysine. Residue Lys-75 is glycosylated (O-linked (Gal...) hydroxylysine). Pro-81, Pro-96, Pro-99, and Pro-105 each carry 4-hydroxyproline. Residues 98–107 are compositionally biased toward pro residues; that stretch reads DPGPRGPPGE. The region spanning 115-245 is the C1q domain; it reads KQKHQSVFTV…VFSGFLLFPD (131 aa). A disulfide bond links Cys-179 and Cys-193.

Core component of the complement C1 complex, a calcium-dependent complex composed of 1 molecule of the C1Q subcomplex, 2 molecules of C1R and 2 molecules of C1S. The C1Q subcomplex is composed 18 subunits: 3 chains of C1QA, C1QB, and C1QC trimerize to form 6 collagen-like triple helices connected to six globular ligand-recognition modules (C1q domain). Post-translationally, O-linked glycans consist of Glc-Gal disaccharides bound to the oxygen atom of post-translationally added hydroxyl groups.

The protein localises to the secreted. Its subcellular location is the cell surface. With respect to regulation, the C1Q subcomplex is inhibited by sulfated molecules, such as triterpenoid sulfates, heparan sulfate, or chondroitin sulfates. Its function is as follows. Core component of the complement C1 complex, a multiprotein complex that initiates the classical pathway of the complement system, a cascade of proteins that leads to phagocytosis and breakdown of pathogens and signaling that strengthens the adaptive immune system. The classical complement pathway is initiated by the C1Q subcomplex of the C1 complex, which specifically binds IgG or IgM immunoglobulins complexed with antigens, forming antigen-antibody complexes on the surface of pathogens: C1QA, together with C1QB and C1QC, specifically recognizes and binds the Fc regions of IgG or IgM via its C1q domain. Immunoglobulin-binding activates the proenzyme C1R, which cleaves C1S, initiating the proteolytic cascade of the complement system. The C1Q subcomplex is activated by a hexamer of IgG complexed with antigens, while it is activated by a pentameric IgM. The C1Q subcomplex also recognizes and binds phosphatidylserine exposed on the surface of cells undergoing programmed cell death, possibly promoting activation of the complement system. The sequence is that of Complement C1q subcomponent subunit C from Rattus norvegicus (Rat).